The sequence spans 135 residues: Endoribonuclease YbeY (135 aa).

Zn(2+) is bound by residues H94, H98, and H104.

This sequence belongs to the endoribonuclease YbeY family. The cofactor is Zn(2+).

It localises to the cytoplasm. Single strand-specific metallo-endoribonuclease involved in late-stage 70S ribosome quality control and in maturation of the 3' terminus of the 16S rRNA. The protein is Endoribonuclease YbeY of Campylobacter jejuni subsp. jejuni serotype O:2 (strain ATCC 700819 / NCTC 11168).